The sequence spans 817 residues: DNA mismatch repair protein MutS (817 aa).

Residue glycine 604–serine 611 coordinates ATP.

This sequence belongs to the DNA mismatch repair MutS family.

This protein is involved in the repair of mismatches in DNA. It is possible that it carries out the mismatch recognition step. This protein has a weak ATPase activity. The chain is DNA mismatch repair protein MutS from Petrotoga mobilis (strain DSM 10674 / SJ95).